Here is a 325-residue protein sequence, read N- to C-terminus: Beta-ketoacyl-[acyl-carrier-protein] synthase III (325 aa).

Residues Cys116 and His252 contribute to the active site. Residues 253–257 (QANLR) form an ACP-binding region. Asn282 is a catalytic residue.

The protein belongs to the thiolase-like superfamily. FabH family. In terms of assembly, homodimer.

Its subcellular location is the cytoplasm. The catalysed reaction is butanoyl-CoA + malonyl-[ACP] + H(+) = 3-oxohexanoyl-[ACP] + CO2 + CoA. It carries out the reaction hexanoyl-CoA + malonyl-[ACP] + H(+) = 3-oxooctanoyl-[ACP] + CO2 + CoA. It catalyses the reaction octanoyl-CoA + malonyl-[ACP] + H(+) = 3-oxodecanoyl-[ACP] + CO2 + CoA. The enzyme catalyses decanoyl-CoA + malonyl-[ACP] + H(+) = 3-oxododecanoyl-[ACP] + CO2 + CoA. The catalysed reaction is 2-methylpropanoyl-CoA + malonyl-[ACP] + H(+) = 4-methyl-3-oxopentanoyl-[ACP] + CO2 + CoA. It carries out the reaction 3-methylbutanoyl-CoA + malonyl-[ACP] + H(+) = 5-methyl-3-oxohexanoyl-[ACP] + CO2 + CoA. It catalyses the reaction malonyl-[ACP] + acetyl-CoA + H(+) = 3-oxobutanoyl-[ACP] + CO2 + CoA. It participates in lipid metabolism; fatty acid biosynthesis. Catalyzes the condensation reaction of fatty acid synthesis by the addition to an acyl acceptor of two carbons from malonyl-ACP. Catalyzes the first condensation reaction which initiates fatty acid synthesis and may therefore play a role in governing the total rate of fatty acid production. Possesses both acetoacetyl-ACP synthase and acetyl transacylase activities. Can use a wide range of acyl-CoAs as the primer substrate in vitro, with a slight preference for short, medium-straight chain acyl-CoAs. Can also use branched-chain acyl-CoAs and acetyl-CoA. This chain is Beta-ketoacyl-[acyl-carrier-protein] synthase III, found in Xanthomonas campestris pv. campestris (strain 8004).